Consider the following 344-residue polypeptide: Ubiquitin-associated domain-containing protein 2 (344 aa).

A signal peptide spans 1–35; it reads MFTSTGSSGLYKAPLSKSLLLVPSALSLLLALLLP. At 36-91 the chain is on the extracellular side; the sequence is HCQKLFVYDLHAVKNDFQIWRLICGRIICLDLKDTFCSSLLIYNFRIFERRYGSRK. A helical membrane pass occupies residues 92 to 112; it reads FASFLLGSWVLSALFDFLLIE. At 113 to 125 the chain is on the cytoplasmic side; that stretch reads AMQYFFGITAASN. The helical transmembrane segment at 126–146 threads the bilayer; that stretch reads LPSGFLAPVFALFVPFYCSIP. Topologically, residues 147-163 are extracellular; it reads RVQVAQILGPLSITNKT. N-linked (GlcNAc...) asparagine glycosylation is present at N161. A helical transmembrane segment spans residues 164-184; the sequence is LIYILGLQLFTSGSYIWIVAI. The Cytoplasmic segment spans residues 185-344; the sequence is SGLMSGLCYD…NVATNFLLQH (160 aa). One can recognise a UBA domain in the interval 304 to 344; sequence EVSEEQVARLMEMGFSRGDALEALRASNNDLNVATNFLLQH.

In terms of assembly, interacts with FAF2. Interacts with LMBR1L. Interacts with AMFR and VCP.

It localises to the endoplasmic reticulum membrane. Restricts trafficking of FAF2 from the endoplasmic reticulum to lipid droplets. In association with LMBR1L and E3 ubiquitin-protein ligase AMFR, negatively regulates the canonical Wnt signaling pathway in the lymphocytes by promoting the ubiquitin-mediated degradation of CTNNB1 and Wnt receptors FZD6 and LRP6. This is Ubiquitin-associated domain-containing protein 2 (UBAC2) from Homo sapiens (Human).